The primary structure comprises 231 residues: Large ribosomal subunit protein uL1 (231 aa).

Belongs to the universal ribosomal protein uL1 family. As to quaternary structure, part of the 50S ribosomal subunit.

Functionally, binds directly to 23S rRNA. The L1 stalk is quite mobile in the ribosome, and is involved in E site tRNA release. Its function is as follows. Protein L1 is also a translational repressor protein, it controls the translation of the L11 operon by binding to its mRNA. The protein is Large ribosomal subunit protein uL1 of Polaromonas naphthalenivorans (strain CJ2).